A 646-amino-acid chain; its full sequence is Translation initiation factor IF-2 (646 aa).

The 170-residue stretch at 146 to 315 (PRPPVVTVMG…LLVAEMEELR (170 aa)) folds into the tr-type G domain. Residues 155 to 162 (GHVDHGKT) are G1. Residue 155-162 (GHVDHGKT) coordinates GTP. Residues 180–184 (GITQH) form a G2 region. Residues 201–204 (DTPG) form a G3 region. GTP-binding positions include 201–205 (DTPGH) and 255–258 (NKID). The segment at 255-258 (NKID) is G4. A G5 region spans residues 291–293 (SAK).

Belongs to the TRAFAC class translation factor GTPase superfamily. Classic translation factor GTPase family. IF-2 subfamily.

It is found in the cytoplasm. One of the essential components for the initiation of protein synthesis. Protects formylmethionyl-tRNA from spontaneous hydrolysis and promotes its binding to the 30S ribosomal subunits. Also involved in the hydrolysis of GTP during the formation of the 70S ribosomal complex. The sequence is that of Translation initiation factor IF-2 from Clostridioides difficile (strain 630) (Peptoclostridium difficile).